We begin with the raw amino-acid sequence, 87 residues long: Small ribosomal subunit protein uS17 (87 aa).

It belongs to the universal ribosomal protein uS17 family. Part of the 30S ribosomal subunit.

In terms of biological role, one of the primary rRNA binding proteins, it binds specifically to the 5'-end of 16S ribosomal RNA. This is Small ribosomal subunit protein uS17 from Bacillus velezensis (strain DSM 23117 / BGSC 10A6 / LMG 26770 / FZB42) (Bacillus amyloliquefaciens subsp. plantarum).